A 121-amino-acid polypeptide reads, in one-letter code: Small ribosomal subunit protein uS13 (121 aa).

Residues 94 to 121 (GLPLRGQRTRTNARTRKGPRRAAQSLKK) are disordered.

This sequence belongs to the universal ribosomal protein uS13 family. As to quaternary structure, part of the 30S ribosomal subunit. Forms a loose heterodimer with protein S19. Forms two bridges to the 50S subunit in the 70S ribosome.

Located at the top of the head of the 30S subunit, it contacts several helices of the 16S rRNA. In the 70S ribosome it contacts the 23S rRNA (bridge B1a) and protein L5 of the 50S subunit (bridge B1b), connecting the 2 subunits; these bridges are implicated in subunit movement. Contacts the tRNAs in the A and P-sites. The sequence is that of Small ribosomal subunit protein uS13 from Paraburkholderia phymatum (strain DSM 17167 / CIP 108236 / LMG 21445 / STM815) (Burkholderia phymatum).